A 506-amino-acid polypeptide reads, in one-letter code: Maturase K (506 aa).

It belongs to the intron maturase 2 family. MatK subfamily.

The protein localises to the plastid. Its subcellular location is the chloroplast. Its function is as follows. Usually encoded in the trnK tRNA gene intron. Probably assists in splicing its own and other chloroplast group II introns. This Erica tetralix (Cross-leaved heath) protein is Maturase K.